Reading from the N-terminus, the 324-residue chain is Probable UDP-sugar transporter protein SLC35A4 (324 aa).

The Cytoplasmic segment spans residues 1 to 18 (MSVEDGGLPGLGGPGQAR). The chain crosses the membrane as a helical span at residues 19 to 39 (WTLMLLLSTATYGAHAPLLAL). The Lumenal segment spans residues 40–52 (CHVDGRVPFRPSS). Residues 53–73 (AVLLTELTKLLLCALSLLVGW) traverse the membrane as a helical segment. Over 74–85 (QAWPPRTPPWRQ) the chain is Cytoplasmic. Residues 86–106 (AAPFALSALLYGANNNLVIHL) form a helical membrane-spanning segment. Over 107–140 (QHYMDPSTYQVLSNLKIGSTALFYCLCLRRRLSA) the chain is Lumenal. The chain crosses the membrane as a helical span at residues 141–161 (RQGLALLLLMAAGACYAAGGL). Over 162-177 (RDPGSPLPESPSTAAS) the chain is Cytoplasmic. The chain crosses the membrane as a helical span at residues 178 to 198 (GPVPLHVTAPGLLLLLLYCLI). At 199 to 214 (SGLSSVYTELLLKRQR) the chain is on the lumenal side. The helical transmembrane segment at 215–235 (LPLALQNLFLYTFGVLLNLGL) threads the bilayer. Residues 236 to 248 (HAGGGPGPGLLEG) are Cytoplasmic-facing. Residues 249-271 (FSGWAALVVLSQALNGLLMSAVM) traverse the membrane as a helical segment. Residues 272–279 (KHGSSITR) are Lumenal-facing. A helical transmembrane segment spans residues 280 to 300 (LFVVSCSLVVNAVLSAALLRL). The Cytoplasmic segment spans residues 301-324 (QLTAAFFLAALLIGLAVHLYYGSR).

It belongs to the nucleotide-sugar transporter family. SLC35A subfamily. In terms of assembly, found in a complex with SLC35A2 and SLC35A3.

It localises to the golgi apparatus membrane. It carries out the reaction CDP-L-ribitol(in) + CDP(out) = CDP-L-ribitol(out) + CDP(in). Mediates the transport of CDP-ribitol. Does not exhibit CMP-sialic acid, UDP-galactose and UDP-N-acetylglucosamine transport activity. The chain is Probable UDP-sugar transporter protein SLC35A4 from Sus scrofa (Pig).